The primary structure comprises 61 residues: Photosystem II reaction center protein K (61 aa).

Residues 1 to 24 (MLNIFNLVCICIHSVLYSSSFFSA) constitute a propeptide that is removed on maturation. A helical membrane pass occupies residues 36–56 (IVDIMPVIPLLFFLLAFVWQA).

Belongs to the PsbK family. As to quaternary structure, PSII is composed of 1 copy each of membrane proteins PsbA, PsbB, PsbC, PsbD, PsbE, PsbF, PsbH, PsbI, PsbJ, PsbK, PsbL, PsbM, PsbT, PsbX, PsbY, PsbZ, Psb30/Ycf12, at least 3 peripheral proteins of the oxygen-evolving complex and a large number of cofactors. It forms dimeric complexes.

The protein localises to the plastid. It localises to the chloroplast thylakoid membrane. One of the components of the core complex of photosystem II (PSII). PSII is a light-driven water:plastoquinone oxidoreductase that uses light energy to abstract electrons from H(2)O, generating O(2) and a proton gradient subsequently used for ATP formation. It consists of a core antenna complex that captures photons, and an electron transfer chain that converts photonic excitation into a charge separation. This is Photosystem II reaction center protein K from Glycine max (Soybean).